The primary structure comprises 472 residues: Argininosuccinate lyase (472 aa).

This sequence belongs to the lyase 1 family. Argininosuccinate lyase subfamily.

It localises to the cytoplasm. It catalyses the reaction 2-(N(omega)-L-arginino)succinate = fumarate + L-arginine. It functions in the pathway amino-acid biosynthesis; L-arginine biosynthesis; L-arginine from L-ornithine and carbamoyl phosphate: step 3/3. The protein is Argininosuccinate lyase of Rhodococcus opacus (strain B4).